A 42-amino-acid polypeptide reads, in one-letter code: MKVIGSLKSAKVRDKDCRVVRRKGRIYVINKKNPRFKARQGY.

It belongs to the bacterial ribosomal protein bL36 family.

In Ehrlichia chaffeensis (strain ATCC CRL-10679 / Arkansas), this protein is Large ribosomal subunit protein bL36.